The primary structure comprises 239 residues: 2-C-methyl-D-erythritol 4-phosphate cytidylyltransferase (239 aa).

Belongs to the IspD/TarI cytidylyltransferase family. IspD subfamily.

It catalyses the reaction 2-C-methyl-D-erythritol 4-phosphate + CTP + H(+) = 4-CDP-2-C-methyl-D-erythritol + diphosphate. Its pathway is isoprenoid biosynthesis; isopentenyl diphosphate biosynthesis via DXP pathway; isopentenyl diphosphate from 1-deoxy-D-xylulose 5-phosphate: step 2/6. Catalyzes the formation of 4-diphosphocytidyl-2-C-methyl-D-erythritol from CTP and 2-C-methyl-D-erythritol 4-phosphate (MEP). The sequence is that of 2-C-methyl-D-erythritol 4-phosphate cytidylyltransferase from Acinetobacter baylyi (strain ATCC 33305 / BD413 / ADP1).